Consider the following 508-residue polypeptide: Photosystem II CP47 reaction center protein (508 aa).

6 consecutive transmembrane segments (helical) span residues 21-36, 101-115, 140-156, 203-218, 237-252, and 457-472; these read SVHIMHTALVAGWAGS, IVFSGLCFLAAIWHW, GIHLFLSGVACFGFGAF, IAAGTLGILAGLFHLS, VLSSSIAAVFFAAFVV, and SFALLFFFGHIWHGAR.

The protein belongs to the PsbB/PsbC family. PsbB subfamily. In terms of assembly, PSII is composed of 1 copy each of membrane proteins PsbA, PsbB, PsbC, PsbD, PsbE, PsbF, PsbH, PsbI, PsbJ, PsbK, PsbL, PsbM, PsbT, PsbX, PsbY, PsbZ, Psb30/Ycf12, at least 3 peripheral proteins of the oxygen-evolving complex and a large number of cofactors. It forms dimeric complexes. Binds multiple chlorophylls. PSII binds additional chlorophylls, carotenoids and specific lipids. serves as cofactor.

The protein resides in the plastid. The protein localises to the chloroplast thylakoid membrane. Functionally, one of the components of the core complex of photosystem II (PSII). It binds chlorophyll and helps catalyze the primary light-induced photochemical processes of PSII. PSII is a light-driven water:plastoquinone oxidoreductase, using light energy to abstract electrons from H(2)O, generating O(2) and a proton gradient subsequently used for ATP formation. This Gossypium hirsutum (Upland cotton) protein is Photosystem II CP47 reaction center protein.